A 737-amino-acid chain; its full sequence is Relaxin receptor 2 (737 aa).

The Extracellular portion of the chain corresponds to 1–399 (MFPLLHFIVL…SSFEDLLANN (399 aa)). The LDL-receptor class A domain maps to 27–64 (LCQKGYFPCGNLTKCLPRAFHCDGVDDCGNGADEDNCG). Intrachain disulfides connect C28–C41, C35–C54, and C48–C63. Residue N37 is glycosylated (N-linked (GlcNAc...) asparagine). N121 carries an N-linked (GlcNAc...) asparagine glycan. LRR repeat units lie at residues 121-142 (NTTL…VFTK), 145-166 (QLKQ…AFFG), 169-190 (NLQI…VFKD), 193-214 (QLTW…LFTG), 217-238 (SLFF…MCAQ), 241-262 (QLNW…SFLS), 265-286 (SLTV…TFSS), 289-310 (NLGE…IFKD), 313-334 (LLQK…QFES), and 337-358 (QLQS…MFQP). An N-linked (GlcNAc...) asparagine glycan is attached at N257. N318 carries N-linked (GlcNAc...) asparagine glycosylation. The N-linked (GlcNAc...) asparagine glycan is linked to N361. Residues 400–420 (ILRIFVWVIAFITCFGNLFVI) traverse the membrane as a helical segment. Residues 421–438 (GMRSFIKAENTTHATSIK) are Cytoplasmic-facing. The helical transmembrane segment at 439–459 (ILCCADCLMGVYLFFIGFFDI) threads the bilayer. The Extracellular segment spans residues 460–478 (KYRGQYQKYALLWMESLQC). Residues C478 and C556 are joined by a disulfide bond. A helical transmembrane segment spans residues 479 to 501 (RLMGFLAMLSTEVSVLLLTYLTL). Residues 502–520 (EKFLAIVFPFSNIRPGKWQ) lie on the Cytoplasmic side of the membrane. The helical transmembrane segment at 521-541 (TMVILICIWIVGFLIAVIPFW) threads the bilayer. At 542–575 (KEDYFGNFYGKNGVCFPLYYDQTEDIGSKGYSLG) the chain is on the extracellular side. The chain crosses the membrane as a helical span at residues 576 to 596 (IFLGVNLLAFLIIVFSYTIMF). Residues 597–622 (CSIKKTALQTSEVRNPIGREVAVANR) are Cytoplasmic-facing. Residues 623–643 (FFFIVFSDAICWIPVFVIKIL) traverse the membrane as a helical segment. Residues 644-653 (SLFRVEIPGT) lie on the Extracellular side of the membrane. A helical transmembrane segment spans residues 654–674 (ITSWIVIFFLPVNSALNPILY). Topologically, residues 675-737 (TLTTSFFKDK…LGDSIVKPIS (63 aa)) are cytoplasmic.

This sequence belongs to the G-protein coupled receptor 1 family.

The protein resides in the cell membrane. Functionally, receptor for relaxin. The activity of this receptor is mediated by G proteins leading to stimulation of adenylate cyclase and an increase of cAMP. May also be a receptor for Leydig insulin-like peptide (INSL3). The protein is Relaxin receptor 2 (RXFP2) of Canis lupus familiaris (Dog).